A 269-amino-acid polypeptide reads, in one-letter code: Integral membrane protein 2C (269 aa).

Thr39 is modified (phosphothreonine). Residues Val57–Ala77 form a helical; Signal-anchor for type II membrane protein membrane-spanning segment. In terms of domain architecture, BRICHOS spans Phe138–Leu232. Cysteines 165 and 224 form a disulfide. Asn171 is a glycosylation site (N-linked (GlcNAc...) asparagine).

This sequence belongs to the ITM2 family. As to quaternary structure, interacts with BACE1. Interacts with APP. Interacts with STMN2. In terms of processing, type I membrane-bound, as well as soluble, furin has a pre-eminent role in ITM2C proteolytic processing. PCSK7 and PCSK5 may also be involved although to a lesser extent. The soluble form of PCSK7 is incapable of processing ITM2C. Fails to undergo shedding by ADAM10 and intramembrane cleavage by SPPL2B.

It localises to the lysosome membrane. Its subcellular location is the cell membrane. Functionally, negative regulator of amyloid-beta peptide production. May inhibit the processing of APP by blocking its access to alpha- and beta-secretase. Binding to the beta-secretase-cleaved APP C-terminal fragment is negligible, suggesting that ITM2C is a poor gamma-secretase cleavage inhibitor. May play a role in TNF-induced cell death and neuronal differentiation. In Sus scrofa (Pig), this protein is Integral membrane protein 2C (ITM2C).